A 189-amino-acid chain; its full sequence is Peptide deformylase (189 aa).

Fe cation is bound by residues C98 and H140. E141 is a catalytic residue. H144 provides a ligand contact to Fe cation.

This sequence belongs to the polypeptide deformylase family. Fe(2+) is required as a cofactor.

The enzyme catalyses N-terminal N-formyl-L-methionyl-[peptide] + H2O = N-terminal L-methionyl-[peptide] + formate. Its function is as follows. Removes the formyl group from the N-terminal Met of newly synthesized proteins. Requires at least a dipeptide for an efficient rate of reaction. N-terminal L-methionine is a prerequisite for activity but the enzyme has broad specificity at other positions. In Porphyromonas gingivalis (strain ATCC 33277 / DSM 20709 / CIP 103683 / JCM 12257 / NCTC 11834 / 2561), this protein is Peptide deformylase.